The following is a 168-amino-acid chain: Crossover junction endodeoxyribonuclease RuvC (168 aa).

Active-site residues include D9, E70, and D145. Mg(2+) contacts are provided by D9, E70, and D145.

This sequence belongs to the RuvC family. As to quaternary structure, homodimer which binds Holliday junction (HJ) DNA. The HJ becomes 2-fold symmetrical on binding to RuvC with unstacked arms; it has a different conformation from HJ DNA in complex with RuvA. In the full resolvosome a probable DNA-RuvA(4)-RuvB(12)-RuvC(2) complex forms which resolves the HJ. The cofactor is Mg(2+).

It localises to the cytoplasm. It catalyses the reaction Endonucleolytic cleavage at a junction such as a reciprocal single-stranded crossover between two homologous DNA duplexes (Holliday junction).. Functionally, the RuvA-RuvB-RuvC complex processes Holliday junction (HJ) DNA during genetic recombination and DNA repair. Endonuclease that resolves HJ intermediates. Cleaves cruciform DNA by making single-stranded nicks across the HJ at symmetrical positions within the homologous arms, yielding a 5'-phosphate and a 3'-hydroxyl group; requires a central core of homology in the junction. The consensus cleavage sequence is 5'-(A/T)TT(C/G)-3'. Cleavage occurs on the 3'-side of the TT dinucleotide at the point of strand exchange. HJ branch migration catalyzed by RuvA-RuvB allows RuvC to scan DNA until it finds its consensus sequence, where it cleaves and resolves the cruciform DNA. This Chlamydia felis (strain Fe/C-56) (Chlamydophila felis) protein is Crossover junction endodeoxyribonuclease RuvC.